We begin with the raw amino-acid sequence, 444 residues long: Trigger factor (444 aa).

The PPIase FKBP-type domain maps to 165 to 250 (GDFAKFDFEG…LHEIQELKIP (86 aa)).

The protein belongs to the FKBP-type PPIase family. Tig subfamily.

The protein localises to the cytoplasm. The catalysed reaction is [protein]-peptidylproline (omega=180) = [protein]-peptidylproline (omega=0). Its function is as follows. Involved in protein export. Acts as a chaperone by maintaining the newly synthesized protein in an open conformation. Functions as a peptidyl-prolyl cis-trans isomerase. The sequence is that of Trigger factor from Campylobacter jejuni subsp. jejuni serotype O:6 (strain 81116 / NCTC 11828).